Reading from the N-terminus, the 514-residue chain is Bifunctional purine biosynthesis protein PurH (514 aa).

The MGS-like domain occupies 1 to 142 (MLALLSVSDK…KNFRHVSVVV (142 aa)).

This sequence belongs to the PurH family.

It catalyses the reaction (6R)-10-formyltetrahydrofolate + 5-amino-1-(5-phospho-beta-D-ribosyl)imidazole-4-carboxamide = 5-formamido-1-(5-phospho-D-ribosyl)imidazole-4-carboxamide + (6S)-5,6,7,8-tetrahydrofolate. The enzyme catalyses IMP + H2O = 5-formamido-1-(5-phospho-D-ribosyl)imidazole-4-carboxamide. Its pathway is purine metabolism; IMP biosynthesis via de novo pathway; 5-formamido-1-(5-phospho-D-ribosyl)imidazole-4-carboxamide from 5-amino-1-(5-phospho-D-ribosyl)imidazole-4-carboxamide (10-formyl THF route): step 1/1. It participates in purine metabolism; IMP biosynthesis via de novo pathway; IMP from 5-formamido-1-(5-phospho-D-ribosyl)imidazole-4-carboxamide: step 1/1. The sequence is that of Bifunctional purine biosynthesis protein PurH from Myxococcus xanthus (strain DK1622).